Reading from the N-terminus, the 320-residue chain is ATP-dependent 6-phosphofructokinase (320 aa).

ATP is bound at residue Gly12. An ADP-binding site is contributed by 22 to 26 (RGVVR). Residues 73–74 (RF) and 103–106 (GDGS) contribute to the ATP site. Asp104 contributes to the Mg(2+) binding site. 126–128 (TID) provides a ligand contact to substrate. Residue Asp128 is the Proton acceptor of the active site. ADP is bound at residue Arg155. Residues Arg163 and 170-172 (MGR) each bind substrate. ADP-binding positions include 186–188 (GCE), Lys212, and 214–216 (KKH). Residues Glu223, Arg244, and 250–253 (HIQR) each bind substrate.

This sequence belongs to the phosphofructokinase type A (PFKA) family. ATP-dependent PFK group I subfamily. Prokaryotic clade 'B1' sub-subfamily. In terms of assembly, homotetramer. Mg(2+) is required as a cofactor.

The protein localises to the cytoplasm. The enzyme catalyses beta-D-fructose 6-phosphate + ATP = beta-D-fructose 1,6-bisphosphate + ADP + H(+). The protein operates within carbohydrate degradation; glycolysis; D-glyceraldehyde 3-phosphate and glycerone phosphate from D-glucose: step 3/4. With respect to regulation, allosterically activated by ADP and other diphosphonucleosides, and allosterically inhibited by phosphoenolpyruvate. Catalyzes the phosphorylation of D-fructose 6-phosphate to fructose 1,6-bisphosphate by ATP, the first committing step of glycolysis. The protein is ATP-dependent 6-phosphofructokinase of Vibrio parahaemolyticus serotype O3:K6 (strain RIMD 2210633).